A 421-amino-acid chain; its full sequence is E3 ubiquitin-protein ligase RMD5 (421 aa).

The CTLH domain occupies 176–236 (EFIEMGQIVH…QIVKHGNPVE (61 aa)). The segment at 361 to 404 (CPVLKEETTTENPPYSLACHHIISKKALDRLSKNGTITFKCPYC) adopts an RING-Gid-type zinc-finger fold.

This sequence belongs to the RMD5/GID2 family. In terms of assembly, identified in the GID/CTLH complex. In the absence of stress, the complex exists as an inactive anticipatory complex (GID(Ant)), composed of VID30/GID1, the E3 ubiquitin-ligase RMD5/GID2, VID28/GID5, GID8, and the RING-like subunit FYV10/GID9, awaiting a substrate receptor to form the active E3 ligase complex. When cells are shifted to glucose-containing medium, the substrate receptor VID24/GID4 is induced and becomes part of the complex, named GID(SR4). Additionally, GID7 transforms the GID(SR4) E3 ligase core into a higher-order supramolecular assembly (Chelator-GID(SR4)) specifically tailored for FBP1 ubiquitination. Under osmotic or heat stress, the substrate receptor GID10 is induced and becomes part of the complex, named GID(SR10). Within the GID complex, interacts directly with GID8, FYV10/GID9 and VID28/GID5.

It is found in the cytoplasm. The catalysed reaction is S-ubiquitinyl-[E2 ubiquitin-conjugating enzyme]-L-cysteine + [acceptor protein]-L-lysine = [E2 ubiquitin-conjugating enzyme]-L-cysteine + N(6)-ubiquitinyl-[acceptor protein]-L-lysine.. It participates in protein modification; protein ubiquitination. Its function is as follows. E3 ubiquitin-protein ligase component of the GID E3 ligase complex recruiting N termini and catalyzing ubiquitination of proteins targeted for degradation. GID E3 is regulated through assembly with interchangeable N-degron-binding substrate receptors induced by distinct environmental perturbations. Required for the adaptation to the presence of glucose in the growth medium; mediates in association with the substrate receptor VID24/GID4 the degradation of enzymes involved in gluconeogenesis when cells are shifted to glucose-containing medium. Required for proteasome-dependent catabolite degradation of fructose-1,6-bisphosphatase (FBP1), malate dehydrogenase (MDH2), and other gluconeogenic enzymes. In Saccharomyces cerevisiae (strain ATCC 204508 / S288c) (Baker's yeast), this protein is E3 ubiquitin-protein ligase RMD5.